Here is a 372-residue protein sequence, read N- to C-terminus: sn-glycerol-3-phosphate import ATP-binding protein UgpC (372 aa).

The ABC transporter domain maps to 2–233 (LDIQQLVKTY…PASTFVASFI (232 aa)). Residue 35-42 (GPSGCGKS) participates in ATP binding.

The protein belongs to the ABC transporter superfamily. sn-glycerol-3-phosphate importer (TC 3.A.1.1.3) family. As to quaternary structure, the complex is composed of two ATP-binding proteins (UgpC), two transmembrane proteins (UgpA and UgpE) and a solute-binding protein (UgpB).

The protein localises to the cell inner membrane. It carries out the reaction sn-glycerol 3-phosphate(out) + ATP + H2O = sn-glycerol 3-phosphate(in) + ADP + phosphate + H(+). Its function is as follows. Part of the ABC transporter complex UgpBAEC involved in sn-glycerol-3-phosphate (G3P) import. Responsible for energy coupling to the transport system. The sequence is that of sn-glycerol-3-phosphate import ATP-binding protein UgpC from Vibrio vulnificus (strain YJ016).